Consider the following 995-residue polypeptide: Secreted protein CSS1 (995 aa).

Residues 1–23 (MFNRLNKFQAALALALYSQSALG) form the signal peptide. Residues 26-253 (YSNSTSISSN…GVSSSGSQSV (228 aa)) form the Methyl-accepting transducer domain. N-linked (GlcNAc...) asparagine glycosylation is found at Asn28 and Asn35. Residues 98 to 276 (SSSSVSDVSS…TSSASTASGS (179 aa)) are disordered. Residues Asn468 and Asn664 are each glycosylated (N-linked (GlcNAc...) asparagine).

The protein belongs to the SRP1/TIP1 family.

It is found in the secreted. Its function is as follows. Secreted protein that may be involved in cell wall organization and biosynthesis. This is Secreted protein CSS1 from Saccharomyces cerevisiae (strain ATCC 204508 / S288c) (Baker's yeast).